The sequence spans 102 residues: uncharacterized protein (102 aa).

The next 2 helical transmembrane spans lie at 28–48 (YLNL…LISI) and 81–101 (LSVL…AGIG).

Its subcellular location is the membrane. This is an uncharacterized protein from Saccharomyces cerevisiae (strain ATCC 204508 / S288c) (Baker's yeast).